Here is a 224-residue protein sequence, read N- to C-terminus: Protein GrpE (224 aa).

Composition is skewed to polar residues over residues 1–16 (MSGDASTSAQDQNVES) and 209–224 (ESSSDAASEQPQEGDA). Disordered regions lie at residues 1–35 (MSGDASTSAQDQNVESNDVPAIPDVDAGTPIDPVV) and 203–224 (SMGPGPESSSDAASEQPQEGDA).

Belongs to the GrpE family. In terms of assembly, homodimer.

It localises to the cytoplasm. In terms of biological role, participates actively in the response to hyperosmotic and heat shock by preventing the aggregation of stress-denatured proteins, in association with DnaK and GrpE. It is the nucleotide exchange factor for DnaK and may function as a thermosensor. Unfolded proteins bind initially to DnaJ; upon interaction with the DnaJ-bound protein, DnaK hydrolyzes its bound ATP, resulting in the formation of a stable complex. GrpE releases ADP from DnaK; ATP binding to DnaK triggers the release of the substrate protein, thus completing the reaction cycle. Several rounds of ATP-dependent interactions between DnaJ, DnaK and GrpE are required for fully efficient folding. In Synechococcus sp. (strain CC9902), this protein is Protein GrpE.